Consider the following 340-residue polypeptide: Chorismate mutase 1, chloroplastic (340 aa).

A chloroplast-targeting transit peptide spans M1–H65. A66 is modified (N-acetylalanine). R79 lines the L-phenylalanine pocket. The Chorismate mutase domain occupies R79–D340. L-tyrosine is bound by residues R150 and N211–S214. N211–S214 is an L-phenylalanine binding site.

Homodimer. Expressed in roots, shoots, rosette leaves, stems, cauline leaves, flowers and siliques.

The protein resides in the plastid. The protein localises to the chloroplast. It carries out the reaction chorismate = prephenate. The protein operates within metabolic intermediate biosynthesis; prephenate biosynthesis; prephenate from chorismate: step 1/1. Its activity is regulated as follows. Allosterically inhibited by tyrosine and phenylalanine. Activated by tryptophan. Its function is as follows. May play a role in chloroplast biogenesis. The protein is Chorismate mutase 1, chloroplastic of Arabidopsis thaliana (Mouse-ear cress).